Reading from the N-terminus, the 160-residue chain is Sperm protein associated with the nucleus on the X chromosome N2 (160 aa).

Disordered stretches follow at residues 1 to 48 (MEKP…TSEY) and 64 to 160 (SNQL…GEED). The span at 10 to 35 (GEKRKSPCDSNNRNDEMQETPNRDLA) shows a compositional bias: basic and acidic residues. Over residues 64–79 (SNQLENDQSQENSVNP) the composition is skewed to polar residues. A compositionally biased stretch (acidic residues) spans 81 to 97 (QEEEDEGSSQEDEDLDS). Residues 136–148 (SSERSSQEEKDPD) show a composition bias toward basic and acidic residues.

Belongs to the SPAN-X family.

This Pongo pygmaeus (Bornean orangutan) protein is Sperm protein associated with the nucleus on the X chromosome N2 (SPANXN2).